The sequence spans 535 residues: Probable bifunctional tRNA threonylcarbamoyladenosine biosynthesis protein (535 aa).

The segment at 1–323 (MICLGLEGTA…YRTDMVEVNW (323 aa)) is kae1. Fe cation is bound by residues His106, His110, and Tyr127. L-threonylcarbamoyladenylate contacts are provided by residues 127-131 (YVSGG), Asp159, Gly172, Glu176, and Asn256. Asp284 serves as a coordination point for Fe cation. The Protein kinase domain maps to 333 to 535 (KIPEHLIGKG…DVERRARYVE (203 aa)). ATP-binding positions include 339–347 (IGKGAEADI) and Lys360. Asp451 serves as the catalytic Proton acceptor; for kinase activity.

This sequence in the N-terminal section; belongs to the KAE1 / TsaD family. It in the C-terminal section; belongs to the protein kinase superfamily. Tyr protein kinase family. BUD32 subfamily. In terms of assembly, component of the KEOPS complex that consists of Kae1, Bud32, Cgi121 and Pcc1; the whole complex dimerizes. The cofactor is Fe(2+).

It localises to the cytoplasm. It carries out the reaction L-seryl-[protein] + ATP = O-phospho-L-seryl-[protein] + ADP + H(+). The enzyme catalyses L-threonyl-[protein] + ATP = O-phospho-L-threonyl-[protein] + ADP + H(+). The catalysed reaction is L-threonylcarbamoyladenylate + adenosine(37) in tRNA = N(6)-L-threonylcarbamoyladenosine(37) in tRNA + AMP + H(+). With respect to regulation, activity provided by the Kae1 region seems to be regulated via phosphorylation by the protein kinase Bud32, which is itself activated by Cgi121. Its function is as follows. Required for the formation of a threonylcarbamoyl group on adenosine at position 37 (t(6)A37) in tRNAs that read codons beginning with adenine. Is a component of the KEOPS complex that is probably involved in the transfer of the threonylcarbamoyl moiety of threonylcarbamoyl-AMP (TC-AMP) to the N6 group of A37. The Kae1 domain likely plays a direct catalytic role in this reaction. The Bud32 domain probably displays kinase activity that regulates Kae1 function. In vitro, exhibits low ATPase activity, but does not bind DNA and does not have endonuclease activity. In Methanocaldococcus jannaschii (strain ATCC 43067 / DSM 2661 / JAL-1 / JCM 10045 / NBRC 100440) (Methanococcus jannaschii), this protein is Probable bifunctional tRNA threonylcarbamoyladenosine biosynthesis protein.